A 737-amino-acid polypeptide reads, in one-letter code: Methylcrotonoyl-CoA carboxylase subunit alpha, mitochondrial (737 aa).

A mitochondrion-targeting transit peptide spans 1–33; that stretch reads MASRLLLLPRRRSRHGGASLLLARLLSSSSSEA. The 448-residue stretch at 38–485 folds into the Biotin carboxylation domain; it reads AVEKVLVANR…DTHFIERYQN (448 aa). Residues lysine 153, 185–246, glutamate 237, and histidine 272 each bind ATP; that span reads ANKI…PRHI. Positions 157–355 constitute an ATP-grasp domain; it reads KRIMGAAGVP…LVEWQIRIAN (199 aa). 3 residues coordinate Mn(2+): glutamate 312, glutamate 326, and asparagine 328. The active site involves arginine 330. Positions 636 to 665 are disordered; that stretch reads YRQTLRAEQSPDDSSQPSASSEARSHPKGS. Low complexity predominate over residues 647 to 657; it reads DDSSQPSASSE. Positions 656–732 constitute a Biotinyl-binding domain; it reads SEARSHPKGS…FDSSVLFTVK (77 aa). Lysine 698 is subject to N6-biotinyllysine.

As to quaternary structure, probably a heterodimer composed of biotin-containing alpha subunits and beta subunits. Biotin serves as cofactor. Requires Mn(2+) as cofactor.

Its subcellular location is the mitochondrion matrix. It catalyses the reaction 3-methylbut-2-enoyl-CoA + hydrogencarbonate + ATP = 3-methyl-(2E)-glutaconyl-CoA + ADP + phosphate + H(+). It participates in amino-acid degradation; L-leucine degradation; (S)-3-hydroxy-3-methylglutaryl-CoA from 3-isovaleryl-CoA: step 2/3. Biotin-attachment subunit of the 3-methylcrotonyl-CoA carboxylase, an enzyme that catalyzes the conversion of 3-methylcrotonyl-CoA to 3-methylglutaconyl-CoA, a critical step for leucine and isovaleric acid catabolism. This chain is Methylcrotonoyl-CoA carboxylase subunit alpha, mitochondrial (MCCA), found in Oryza sativa subsp. japonica (Rice).